Here is a 320-residue protein sequence, read N- to C-terminus: 7-acetyl-epi-neemfruitin B aldo-keto reductase (320 aa).

Asp51 is a binding site for NADP(+). Residue Tyr56 is the Proton donor of the active site. Residues Gln186 and 264 to 272 (FNKQRMEEN) each bind NADP(+).

The protein belongs to the aldo/keto reductase family. In terms of tissue distribution, mainly expressed in petioles and, to a lower extent, in roots.

It carries out the reaction 7-acetyl-epi-neemfruitin B + AH2 + H2O = (1S,3bR,4R,5aR,9aR,9bR,11aS)-1-[(4R)-5-[(2S)-3,3-dimethyloxiran-2-yl]-1,4-dihydroxybutan-2-yl]-3b,6,6,9a,11a-pentamethyl-7-oxo-1H,2H,3bH,4H,5H,5aH,6H,7H,9aH,9bH,10H,11H,11aH-cyclopenta[a]phenanthren-4-yl acetate + acetate + A + H(+). It functions in the pathway secondary metabolite biosynthesis; terpenoid biosynthesis. Aldo-keto reductase involved in the biosynthesis of limonoids triterpene natural products such as azadirachtin, an antifeedant widely used as bioinsecticide, and possessing many medicinal applications including anti-tumoral, anti-malarial, anti-rheumatic, antibacterial, anti-inflammatory, anti-pyretic and diuretic effects. Can use 7-acetyl-epi-neemfruitin B as substrate. The protein is 7-acetyl-epi-neemfruitin B aldo-keto reductase of Melia azedarach (Chinaberry tree).